Consider the following 317-residue polypeptide: 4-diphosphocytidyl-2-C-methyl-D-erythritol kinase (317 aa).

The active site involves Lys-11. Residue 99–109 (PVAAGLAGGST) participates in ATP binding. The active site involves Asp-141.

The protein belongs to the GHMP kinase family. IspE subfamily.

It carries out the reaction 4-CDP-2-C-methyl-D-erythritol + ATP = 4-CDP-2-C-methyl-D-erythritol 2-phosphate + ADP + H(+). The protein operates within isoprenoid biosynthesis; isopentenyl diphosphate biosynthesis via DXP pathway; isopentenyl diphosphate from 1-deoxy-D-xylulose 5-phosphate: step 3/6. In terms of biological role, catalyzes the phosphorylation of the position 2 hydroxy group of 4-diphosphocytidyl-2C-methyl-D-erythritol. The chain is 4-diphosphocytidyl-2-C-methyl-D-erythritol kinase from Nostoc sp. (strain PCC 7120 / SAG 25.82 / UTEX 2576).